A 243-amino-acid chain; its full sequence is Probable transcriptional regulatory protein Bpet3099 (243 aa).

The tract at residues 1–21 (MAGHSKWANIQHRKGRQDAKR) is disordered.

It belongs to the TACO1 family.

The protein localises to the cytoplasm. The protein is Probable transcriptional regulatory protein Bpet3099 of Bordetella petrii (strain ATCC BAA-461 / DSM 12804 / CCUG 43448).